We begin with the raw amino-acid sequence, 717 residues long: Adhesion cell surface protein MAD1 (717 aa).

Positions 1 to 19 (MKSALSVVVAAAGVQQASA) are cleaved as a signal peptide. Composition is skewed to low complexity over residues 237–254 (TPVTTLQTYTTPSQQTTT) and 262–274 (SKETTTSAQQTTP). 2 disordered regions span residues 237–392 (TPVT…ATTT) and 451–506 (RTQS…TPPC). 8 repeat units span residues 275–286 (GKETTPAQQTTP), 287–298 (SKETTPVQQTTS), 299–310 (GKETTPAQQTTP), 311–328 (GKETTSSQETTSAHQTTP), 329–340 (GKETTPAQQTTP), 341–352 (GKETTPAQQTTP), 353–364 (GKETTPAQQTTP), and 365–376 (GKETTPAQQTTP). A compositionally biased stretch (polar residues) spans 275 to 366 (GKETTPAQQT…TPAQQTTPGK (92 aa)). Low complexity-rich tracts occupy residues 368-392 (TTPAQQTTPGQQTTPSQPTTAATTT) and 484-503 (QPTGEKPNPVTSQPPQSTQT). One can recognise a CFEM domain in the interval 481 to 595 (TPEQPTGEKP…TQIITVTGTP (115 aa)). Intrachain disulfides connect Cys-513–Cys-546, Cys-524–Cys-532, and Cys-534–Cys-568. Residue Asp-529 coordinates heme. N-linked (GlcNAc...) asparagine glycosylation occurs at Asn-614. Positions 632–690 (PTPTGGVPNQPPATASVPAGQNPPPVTGQNPPPAVTDQSPPPAITTGTGGVIPPKPTGS) are disordered. Pro residues predominate over residues 652 to 674 (QNPPPVTGQNPPPAVTDQSPPPA). A lipid anchor (GPI-anchor amidated alanine) is attached at Ala-695. Residues 696–717 (GSGRVGAGLGMVLAVAAFVAAL) constitute a propeptide, removed in mature form.

It belongs to the RBT5 family. Post-translationally, the GPI-anchor is attached to the protein in the endoplasmic reticulum and serves to target the protein to the cell surface. There, the glucosamine-inositol phospholipid moiety is cleaved off and the GPI-modified mannoprotein is covalently attached via its lipidless GPI glycan remnant to the 1,6-beta-glucan of the outer cell wall layer.

The protein localises to the secreted. It is found in the cell wall. Its subcellular location is the cell membrane. In terms of biological role, cell surface adhesion protein that plays a key role in virulence by allowing adherence to the insect host surface. Required to orientate the cytoskeleton and stimulate the expression of genes involved in the cell cycle. Is also involved in achieving the septin hourglass shape and subsequent separation of cells. In Metarhizium anisopliae (Entomophthora anisopliae), this protein is Adhesion cell surface protein MAD1.